The chain runs to 295 residues: Pyridoxal 5'-phosphate synthase subunit PdxS (295 aa).

D25 contacts D-ribose 5-phosphate. The Schiff-base intermediate with D-ribose 5-phosphate role is filled by K82. G154 serves as a coordination point for D-ribose 5-phosphate. R166 contributes to the D-glyceraldehyde 3-phosphate binding site. D-ribose 5-phosphate-binding positions include G215 and 236–237 (GS).

It belongs to the PdxS/SNZ family. In the presence of PdxT, forms a dodecamer of heterodimers.

It catalyses the reaction aldehydo-D-ribose 5-phosphate + D-glyceraldehyde 3-phosphate + L-glutamine = pyridoxal 5'-phosphate + L-glutamate + phosphate + 3 H2O + H(+). The protein operates within cofactor biosynthesis; pyridoxal 5'-phosphate biosynthesis. Functionally, catalyzes the formation of pyridoxal 5'-phosphate from ribose 5-phosphate (RBP), glyceraldehyde 3-phosphate (G3P) and ammonia. The ammonia is provided by the PdxT subunit. Can also use ribulose 5-phosphate and dihydroxyacetone phosphate as substrates, resulting from enzyme-catalyzed isomerization of RBP and G3P, respectively. The chain is Pyridoxal 5'-phosphate synthase subunit PdxS from Actinobacillus pleuropneumoniae serotype 5b (strain L20).